The following is a 616-amino-acid chain: Dihydroxy-acid dehydratase (616 aa).

D81 serves as a coordination point for Mg(2+). C122 provides a ligand contact to [2Fe-2S] cluster. The Mg(2+) site is built by D123 and K124. K124 carries the post-translational modification N6-carboxylysine. C195 is a [2Fe-2S] cluster binding site. E491 contributes to the Mg(2+) binding site. S517 functions as the Proton acceptor in the catalytic mechanism.

It belongs to the IlvD/Edd family. Homodimer. [2Fe-2S] cluster is required as a cofactor. The cofactor is Mg(2+).

The catalysed reaction is (2R)-2,3-dihydroxy-3-methylbutanoate = 3-methyl-2-oxobutanoate + H2O. The enzyme catalyses (2R,3R)-2,3-dihydroxy-3-methylpentanoate = (S)-3-methyl-2-oxopentanoate + H2O. It participates in amino-acid biosynthesis; L-isoleucine biosynthesis; L-isoleucine from 2-oxobutanoate: step 3/4. The protein operates within amino-acid biosynthesis; L-valine biosynthesis; L-valine from pyruvate: step 3/4. Its function is as follows. Functions in the biosynthesis of branched-chain amino acids. Catalyzes the dehydration of (2R,3R)-2,3-dihydroxy-3-methylpentanoate (2,3-dihydroxy-3-methylvalerate) into 2-oxo-3-methylpentanoate (2-oxo-3-methylvalerate) and of (2R)-2,3-dihydroxy-3-methylbutanoate (2,3-dihydroxyisovalerate) into 2-oxo-3-methylbutanoate (2-oxoisovalerate), the penultimate precursor to L-isoleucine and L-valine, respectively. The chain is Dihydroxy-acid dehydratase from Escherichia coli O8 (strain IAI1).